The chain runs to 509 residues: Protein Jade-1 (509 aa).

A disordered region spans residues 1–45; it reads MKRGRLPSSSEDSDDNGSLSTTWSQNSRSQHRRSSCSRPEDRKPS. Residues 60 to 80 form an interaction with KAT7/HBO1 and histones region; it reads DSYQLNPDEYYVLADPWRQEW. Residues 80–188 are interaction with histones; sequence WEKGVQVPVS…EQRCYDNMNH (109 aa). Ser-89 is subject to Phosphoserine. The residue at position 92 (Thr-92) is a Phosphothreonine. Lys-114 participates in a covalent cross-link: Glycyl lysine isopeptide (Lys-Gly) (interchain with G-Cter in SUMO2). The PHD-type 1 zinc-finger motif lies at 203–253; that stretch reads YVVCDVCQSPDGEDGNEMVFCDKCNICVHQACYGILKVPEGSWLCRTCALG. Residues 255 to 289 form a C2HC pre-PHD-type zinc finger; it reads QPKCLLCPKKGGAMKPTRSGTKWVHVSCALWIPEV. The PHD-type 2 zinc finger occupies 313 to 369; the sequence is LVCSLCNEKFGASIQCSVKNCRTAFHVTCAFDRGLEMKTILAENDEVKFKSYCPKHS. The segment at 373–399 is disordered; that stretch reads KAEEGLGEGTAQENGAPECSPRDPLEP.

The protein belongs to the JADE family. In terms of assembly, component of the HBO1 complex composed at least of ING4 or ING5, KAT7/HBO1, MEAF6, and one of JADE1, JADE2 and JADE3. Interacts with NPHP4.

It localises to the nucleus. The protein localises to the chromosome. Its subcellular location is the cytoplasm. The protein resides in the cytoskeleton. It is found in the cilium basal body. Scaffold subunit of some HBO1 complexes, which have a histone H4 acetyltransferase activity. Plays a key role in HBO1 complex by directing KAT7/HBO1 specificity towards histone H4 acetylation (H4K5ac, H4K8ac and H4K12ac), regulating DNA replication initiation, regulating DNA replication initiation. May also promote acetylation of nucleosomal histone H4 by KAT5. Promotes apoptosis. May act as a renal tumor suppressor. Negatively regulates canonical Wnt signaling; at least in part, cooperates with NPHP4 in this function. This Bos taurus (Bovine) protein is Protein Jade-1 (JADE1).